We begin with the raw amino-acid sequence, 316 residues long: Ribonuclease Z (316 aa).

Positions 61, 63, 65, 66, 152, 220, and 279 each coordinate Zn(2+). Asp65 serves as the catalytic Proton acceptor.

It belongs to the RNase Z family. Homodimer. The cofactor is Zn(2+).

The enzyme catalyses Endonucleolytic cleavage of RNA, removing extra 3' nucleotides from tRNA precursor, generating 3' termini of tRNAs. A 3'-hydroxy group is left at the tRNA terminus and a 5'-phosphoryl group is left at the trailer molecule.. Zinc phosphodiesterase, which displays some tRNA 3'-processing endonuclease activity. Probably involved in tRNA maturation, by removing a 3'-trailer from precursor tRNA. This is Ribonuclease Z from Clostridium perfringens (strain ATCC 13124 / DSM 756 / JCM 1290 / NCIMB 6125 / NCTC 8237 / Type A).